The following is a 310-amino-acid chain: MSQNNPLRALLDKQDILLLDGAMATELEARGCNLADSLWSAKVLVENPELIREVHLDYYRAGAQCAITASYQATPAGFAARGLDEAQSKALIGKSVELARKAREAYLAENPQAGTLLVAGSVGPYGAYLADGSEYRGDYHCSVEAFQAFHRPRVEALLDAGADLLACETLPNFSEIEALAELLTAYPRARAWFSFTLRDSEHLSDGTPLRDVVALLAGYPQVVALGINCIALENTTAALQHLHGLTVLPLVVYPNSGEHYDAVSKTWHHHGEHCAQLADYLPQWQAAGARLIGGCCRTTPADIAALKARS.

The Hcy-binding domain maps to 1 to 310 (MSQNNPLRAL…ADIAALKARS (310 aa)). Positions 229, 295, and 296 each coordinate Zn(2+).

Monomer. Requires Zn(2+) as cofactor.

It carries out the reaction S-methyl-L-methionine + L-homocysteine = 2 L-methionine + H(+). Its function is as follows. Catalyzes methyl transfer from S-methylmethionine or S-adenosylmethionine (less efficient) to homocysteine, selenohomocysteine and less efficiently selenocysteine. The polypeptide is Homocysteine S-methyltransferase (mmuM) (Escherichia coli (strain K12)).